The chain runs to 253 residues: RBPJ-interacting and tubulin-associated protein 1 (253 aa).

Disordered stretches follow at residues 30–89 (SPAR…KNKY), 127–175 (TPPA…LCVP), and 188–253 (HLTV…PPWK). Polar residues predominate over residues 71-81 (SPSSRGSTPNL). Residues 81 to 97 (LTPRKKNKYRLIGHAPS) carry the Nuclear localization signal motif. The tract at residues 112 to 140 (RMAVGDAAKLRTLFWTPPATPRGSHTPCP) is interaction with RBPJ/RBPSUH. An interaction with tubulin region spans residues 140-253 (PRETPLRAIH…CPPKPKPPWK (114 aa)). The span at 188-228 (HLTVPSTGHPASSAPQTNGPWSPRPNTSGATVQSPLVTSKA) shows a compositional bias: polar residues.

This sequence belongs to the RITA family. In terms of assembly, interacts with RBPJ/RBPSUH.

It is found in the cytoplasm. It localises to the nucleus. The protein resides in the cytoskeleton. Its subcellular location is the microtubule organizing center. The protein localises to the centrosome. Its function is as follows. Tubulin-binding protein that acts as a negative regulator of Notch signaling pathway. Shuttles between the cytoplasm and the nucleus and mediates the nuclear export of RBPJ/RBPSUH, thereby preventing the interaction between RBPJ/RBPSUH and NICD product of Notch proteins (Notch intracellular domain), leading to down-regulate Notch-mediated transcription. May play a role in neurogenesis. This Mus musculus (Mouse) protein is RBPJ-interacting and tubulin-associated protein 1 (Rita1).